The chain runs to 385 residues: Mannitol-1-phosphate 5-dehydrogenase (385 aa).

3–14 contributes to the NAD(+) binding site; it reads ALQFGAGNIGRG.

This sequence belongs to the mannitol dehydrogenase family.

It carries out the reaction D-mannitol 1-phosphate + NAD(+) = beta-D-fructose 6-phosphate + NADH + H(+). In Buchnera aphidicola subsp. Acyrthosiphon pisum (strain 5A), this protein is Mannitol-1-phosphate 5-dehydrogenase.